The sequence spans 70 residues: Myotoxin (70 aa).

An N-terminal signal peptide occupies residues 1 to 22; it reads MKILYLLFAFLFLAFLSEPGNA. Intrachain disulfides connect C26–C58, C33–C52, and C40–C59.

It belongs to the crotamine-myotoxin family. In terms of assembly, monomer. As to expression, expressed by the venom gland.

The protein localises to the secreted. In terms of biological role, cationic peptide that possesses multiple functions. It acts as a cell-penetrating peptide (CPP), and as a potent voltage-gated potassium channel (Kv) inhibitor. It exhibits antimicrobial activities, hind limb paralysis, and severe muscle necrosis by a non-enzymatic mechanism. This Crotalus helleri (Southern pacific rattlesnake) protein is Myotoxin.